Reading from the N-terminus, the 71-residue chain is Translation initiation factor IF-1 (71 aa).

Residues 1 to 71 (MSKDDLIQFT…LTKGRVIHRH (71 aa)) form the S1-like domain.

Belongs to the IF-1 family. As to quaternary structure, component of the 30S ribosomal translation pre-initiation complex which assembles on the 30S ribosome in the order IF-2 and IF-3, IF-1 and N-formylmethionyl-tRNA(fMet); mRNA recruitment can occur at any time during PIC assembly.

It is found in the cytoplasm. Functionally, one of the essential components for the initiation of protein synthesis. Stabilizes the binding of IF-2 and IF-3 on the 30S subunit to which N-formylmethionyl-tRNA(fMet) subsequently binds. Helps modulate mRNA selection, yielding the 30S pre-initiation complex (PIC). Upon addition of the 50S ribosomal subunit IF-1, IF-2 and IF-3 are released leaving the mature 70S translation initiation complex. The protein is Translation initiation factor IF-1 of Rickettsia conorii (strain ATCC VR-613 / Malish 7).